Consider the following 387-residue polypeptide: Protein-glutamate methylesterase/protein-glutamine glutaminase 1 (387 aa).

Residues 18–136 enclose the Response regulatory domain; it reads RVMVVDDSAV…EISGGTDFRH (119 aa). Asp69 is subject to 4-aspartylphosphate. A CheB-type methylesterase domain is found at 190 to 387; that stretch reads PAAEERPDII…AYVLRSANKR (198 aa). Active-site residues include Ser204, His233, and Asp329.

It belongs to the CheB family. Post-translationally, phosphorylated by CheA. Phosphorylation of the N-terminal regulatory domain activates the methylesterase activity.

Its subcellular location is the cytoplasm. It carries out the reaction [protein]-L-glutamate 5-O-methyl ester + H2O = L-glutamyl-[protein] + methanol + H(+). It catalyses the reaction L-glutaminyl-[protein] + H2O = L-glutamyl-[protein] + NH4(+). Functionally, involved in chemotaxis. Part of a chemotaxis signal transduction system that modulates chemotaxis in response to various stimuli. Catalyzes the demethylation of specific methylglutamate residues introduced into the chemoreceptors (methyl-accepting chemotaxis proteins or MCP) by CheR. Also mediates the irreversible deamidation of specific glutamine residues to glutamic acid. The sequence is that of Protein-glutamate methylesterase/protein-glutamine glutaminase 1 from Rhodospirillum rubrum (strain ATCC 11170 / ATH 1.1.1 / DSM 467 / LMG 4362 / NCIMB 8255 / S1).